A 223-amino-acid chain; its full sequence is Alpha-S2-casein (223 aa).

Positions 1–15 are cleaved as a signal peptide; sequence MKFFIFTCLLAVALA. Residues Ser23, Ser24, Ser25, Ser72, Ser73, Ser74, Ser77, Ser145, Ser147, Ser151, and Ser159 each carry the phosphoserine modification. A repeat spans 77 to 141; sequence SAEVAPEEIK…AGPFTPTVNR (65 aa). The segment at residues 159–223 is a repeat; it reads STEVFTKKTK…TNAIPYVRYL (65 aa).

Belongs to the alpha-casein family. In terms of tissue distribution, mammary gland specific. Secreted in milk.

It is found in the secreted. Important role in the capacity of milk to transport calcium phosphate. The protein is Alpha-S2-casein (CSN1S2) of Capra hircus (Goat).